The chain runs to 134 residues: MPPKGRQGAAKKVRRKEKKNVAHGHAHIKSTFNNTIVSITDPTGNVISWASAGHVGFKGSRKSTPFAAQMAAESAARRAQEHGMRKVDVFVKGPGSGRETAIRSLQATGLEVGSIQDVTPTPHNGCRPPKRRRV.

Disordered stretches follow at residues Met1–Ala22 and Ser114–Val134. Positions Ala9–Ala22 are enriched in basic residues.

It belongs to the universal ribosomal protein uS11 family. Part of the 30S ribosomal subunit. Interacts with proteins S7 and S18. Binds to IF-3.

Functionally, located on the platform of the 30S subunit, it bridges several disparate RNA helices of the 16S rRNA. Forms part of the Shine-Dalgarno cleft in the 70S ribosome. This Streptomyces coelicolor (strain ATCC BAA-471 / A3(2) / M145) protein is Small ribosomal subunit protein uS11.